The chain runs to 134 residues: Small ribosomal subunit protein uS8c (134 aa).

Belongs to the universal ribosomal protein uS8 family. As to quaternary structure, part of the 30S ribosomal subunit.

It localises to the plastid. Its subcellular location is the chloroplast. One of the primary rRNA binding proteins, it binds directly to 16S rRNA central domain where it helps coordinate assembly of the platform of the 30S subunit. This chain is Small ribosomal subunit protein uS8c (rps8), found in Nicotiana tomentosiformis (Tobacco).